The following is a 589-amino-acid chain: MTLHSNSTTSPLFPNISSSWVHSPSEAGLPLGTVSQLDSYNISQTSGNFSSNDTSSDPLGGHTIWQVVFIAFLTGFLALVTIIGNILVIVAFKVNKQLKTVNNYFLLSLACADLIIGVISMNLFTTYIIMNRWALGNLACDLWLSIDYVASNASVMNLLVISFDRYFSITRPLTYRAKRTTKRAGVMIGLAWVISFVLWAPAILFWQYFVGKRTVPPGECFIQFLSEPTITFGTAIAAFYMPVTIMTILYWRIYKETEKRTKELAGLQASGTEAEAENFVHPTGSSRSCSSYELQQQGTKRSSRRKYGGCHFWFTTKSWKPSAEQMDQDHSSSDSWNNNDAAASLENSASSDEEDIGSETRAIYSIVLKLPGHSTILNSTKLPSSDNLQVPDKDLGTMDVERNAHKLQAQKSMDDRDNCQKDFSKLPIQLESAVDTAKTSDTNSSVDKTTAALPLSFKEATLAKRFALKTRSQITKRKRMSLIKEKKAAQTLSAILLAFIITWTPYNIMVLVNTFCDSCIPKTYWNLGYWLCYINSTVNPVCYALCNKTFRTTFKMLLLCQCDKRKRRKQQYQQRQSVIFHKRVPEQAL.

The Extracellular segment spans residues 1–66; the sequence is MTLHSNSTTS…DPLGGHTIWQ (66 aa). 5 N-linked (GlcNAc...) asparagine glycosylation sites follow: asparagine 6, asparagine 15, asparagine 41, asparagine 48, and asparagine 52. Residues 67 to 90 traverse the membrane as a helical segment; it reads VVFIAFLTGFLALVTIIGNILVIV. Residues 91–103 lie on the Cytoplasmic side of the membrane; it reads AFKVNKQLKTVNN. Residues 104 to 129 traverse the membrane as a helical segment; sequence YFLLSLACADLIIGVISMNLFTTYII. The Extracellular segment spans residues 130 to 141; it reads MNRWALGNLACD. Cysteines 140 and 220 form a disulfide. Residues 142–163 traverse the membrane as a helical segment; that stretch reads LWLSIDYVASNASVMNLLVISF. At 164–183 the chain is on the cytoplasmic side; sequence DRYFSITRPLTYRAKRTTKR. A helical membrane pass occupies residues 184 to 205; that stretch reads AGVMIGLAWVISFVLWAPAILF. Residues 206 to 228 are Extracellular-facing; the sequence is WQYFVGKRTVPPGECFIQFLSEP. Residues 229-251 traverse the membrane as a helical segment; it reads TITFGTAIAAFYMPVTIMTILYW. Topologically, residues 252–490 are cytoplasmic; the sequence is RIYKETEKRT…SLIKEKKAAQ (239 aa). The Basolateral sorting signal motif lies at 274 to 280; the sequence is AEAENFV. 2 disordered regions span residues 275 to 295 and 323 to 356; these read EAENFVHPTGSSRSCSSYELQ and AEQMDQDHSSSDSWNNNDAAASLENSASSDEEDI. The segment covering 283-295 has biased composition (polar residues); it reads TGSSRSCSSYELQ. A compositionally biased stretch (low complexity) spans 333 to 344; it reads SDSWNNNDAAAS. Serine 384 is subject to Phosphoserine. Residues 491-513 traverse the membrane as a helical segment; that stretch reads TLSAILLAFIITWTPYNIMVLVN. Over 514-525 the chain is Extracellular; sequence TFCDSCIPKTYW. A disulfide bond links cysteine 516 and cysteine 519. Residues 526-545 traverse the membrane as a helical segment; that stretch reads NLGYWLCYINSTVNPVCYAL. Over 546–589 the chain is Cytoplasmic; the sequence is CNKTFRTTFKMLLLCQCDKRKRRKQQYQQRQSVIFHKRVPEQAL.

The protein belongs to the G-protein coupled receptor 1 family. Muscarinic acetylcholine receptor subfamily. CHRM3 sub-subfamily. As to quaternary structure, homodimer; the dimers can form tetramers. Interacts with NALCN. Interacts with TMEM147. Expressed in cerebral cortex, submandibular gland, hypothalamus, pancreas, liver, and ileum.

Its subcellular location is the cell membrane. The protein resides in the postsynaptic cell membrane. It is found in the basolateral cell membrane. The protein localises to the endoplasmic reticulum membrane. Functionally, the muscarinic acetylcholine receptor mediates various cellular responses, including inhibition of adenylate cyclase, breakdown of phosphoinositides and modulation of potassium channels through the action of G proteins. Primary transducing effect is Pi turnover. This Mus musculus (Mouse) protein is Muscarinic acetylcholine receptor M3 (Chrm3).